Consider the following 177-residue polypeptide: tRNA (cytidine(56)-2'-O)-methyltransferase (177 aa).

S-adenosyl-L-methionine-binding positions include leucine 83 and 108-112; that span reads GAEKV.

It belongs to the aTrm56 family. Homodimer.

It is found in the cytoplasm. It catalyses the reaction cytidine(56) in tRNA + S-adenosyl-L-methionine = 2'-O-methylcytidine(56) in tRNA + S-adenosyl-L-homocysteine + H(+). In terms of biological role, specifically catalyzes the AdoMet-dependent 2'-O-ribose methylation of cytidine at position 56 in tRNAs. The sequence is that of tRNA (cytidine(56)-2'-O)-methyltransferase from Nitrosopumilus maritimus (strain SCM1).